Consider the following 239-residue polypeptide: tRNA (guanine-N(7)-)-methyltransferase (239 aa).

Positions 69, 94, 121, and 144 each coordinate S-adenosyl-L-methionine. The active site involves D144. Substrate contacts are provided by residues K148, D180, and 217–220 (TKFE).

The protein belongs to the class I-like SAM-binding methyltransferase superfamily. TrmB family.

The enzyme catalyses guanosine(46) in tRNA + S-adenosyl-L-methionine = N(7)-methylguanosine(46) in tRNA + S-adenosyl-L-homocysteine. Its pathway is tRNA modification; N(7)-methylguanine-tRNA biosynthesis. Its function is as follows. Catalyzes the formation of N(7)-methylguanine at position 46 (m7G46) in tRNA. This is tRNA (guanine-N(7)-)-methyltransferase from Pseudoalteromonas atlantica (strain T6c / ATCC BAA-1087).